Here is a 295-residue protein sequence, read N- to C-terminus: Deoxyuridine 5'-triphosphate nucleotidohydrolase (295 aa).

Position 178 to 180 (178 to 180) interacts with substrate; that stretch reads RSG. Residues 260 to 272 show a composition bias toward basic and acidic residues; sequence NSVRKHTHEDNPV. Residues 260–295 are disordered; the sequence is NSVRKHTHEDNPVHEPNVATASADIRGTKGLGSSGF.

Belongs to the dUTPase family. Mg(2+) is required as a cofactor.

It carries out the reaction dUTP + H2O = dUMP + diphosphate + H(+). Involved in nucleotide metabolism: produces dUMP, the immediate precursor of thymidine nucleotides and decreases the intracellular concentration of dUTP to avoid uracil incorporation into viral DNA. The polypeptide is Deoxyuridine 5'-triphosphate nucleotidohydrolase (Human herpesvirus 8 type P (isolate GK18) (HHV-8)).